The chain runs to 295 residues: UDP-N-acetylenolpyruvoylglucosamine reductase (295 aa).

The FAD-binding PCMH-type domain occupies 23-188 (KVGGPADFLA…ISAKFALKPG (166 aa)). Residue Arg-167 is part of the active site. The Proton donor role is filled by Ser-217. Residue Glu-287 is part of the active site.

It belongs to the MurB family. The cofactor is FAD.

It is found in the cytoplasm. The catalysed reaction is UDP-N-acetyl-alpha-D-muramate + NADP(+) = UDP-N-acetyl-3-O-(1-carboxyvinyl)-alpha-D-glucosamine + NADPH + H(+). The protein operates within cell wall biogenesis; peptidoglycan biosynthesis. Cell wall formation. This chain is UDP-N-acetylenolpyruvoylglucosamine reductase, found in Streptococcus pyogenes serotype M3 (strain ATCC BAA-595 / MGAS315).